The sequence spans 565 residues: MFSVNNTHSSVSCSPSINSNSTSNEHYLRILTEWEKNSSPGEERGIAFNRLSQCFQNQEAVLNLSDLNLTSLPELPKHISALIVENNKLTSLPKLPAFLKELNADNNRLSVIPELPESLTTLSVRSNQLENLPVLPNHLTSLFVENNRLYNLPALPEKLKFLHVYYNRLTTLPDLPDKLEILCAQRNNLVTFPQFSDRNNIRQKEYYFHFNQITTLPESFSQLDSSYRINISGNPLSTRVLQSLQRLTSSPDYHGPQIYFSMSDGQQNTLHRPLADAVTAWFPENKQSDVSQIWHAFEHEEHANTFSAFLDRLSDTVSARNTSGFREQVAAWLEKLSASAELRQQSFAVAADATESCEDRVALTWNNLRKTLLVHQASEGLFDNDTGALLSLGREMFRLEILEDIARDKVRTLHFVDEIEVYLAFQTMLAEKLQLSTAVKEMRFYGVSGVTANDLRTAEAMVRSREENEFTDWFSLWGPWHAVLKRTEADRWAQAEEQKYEMLENEYSQRVADRLKASGLSGDADAEREAGAQVMRETEQQIYRQLTDEVLALRLSENGSRLHHS.

Residues 1-22 are disordered; that stretch reads MFSVNNTHSSVSCSPSINSNST. The interaction with target proteins stretch occupies residues 1–262; sequence MFSVNNTHSS…YHGPQIYFSM (262 aa). Positions 9–22 are enriched in low complexity; it reads SSVSCSPSINSNST. LRR repeat units follow at residues 58–79, 80–97, 98–119, 120–137, 138–157, 158–179, 180–199, 202–223, and 225–248; these read QEAV…PKHI, SALI…KLPA, FLKE…PESL, TTLS…VLPN, HLTS…ALPE, KLKF…PDKL, EILC…SDRN, RQKE…FSQL, and SSYR…QRLT. Residues 263-270 are linker; it reads SDGQQNTL. Positions 271–565 are E3 ubiquitin-protein ligase catalytic domain; it reads HRPLADAVTA…SENGSRLHHS (295 aa). One can recognise an NEL domain in the interval 273-565; sequence PLADAVTAWF…SENGSRLHHS (293 aa). The active-site Glycyl thioester intermediate is the cysteine 357.

The protein belongs to the LRR-containing bacterial E3 ligase family. Post-translationally, ubiquitinated in the presence of host E1 ubiquitin-activating enzyme, E2 ubiquitin-conjugating enzyme and ubiquitin.

It is found in the secreted. The protein localises to the host cytoplasm. The enzyme catalyses S-ubiquitinyl-[E2 ubiquitin-conjugating enzyme]-L-cysteine + [acceptor protein]-L-lysine = [E2 ubiquitin-conjugating enzyme]-L-cysteine + N(6)-ubiquitinyl-[acceptor protein]-L-lysine.. It participates in protein modification; protein ubiquitination. Functionally, E3 ubiquitin ligase effector protein that interferes with host's innate immunity. Functions to alter host cell physiology and promote bacterial survival in host tissues. Catalyzes ubiquitination of human gasdermins GSDMB and GSDMD, promoting their degradation by the proteasome, thereby preventing cell death. In contrast, activates host cell pyroptosis in mouse cells: catalyzes ubiquitination of mouse Nlrp1b allele 1 protein, releasing the cleaved C-terminal part of Nlrp1b, which polymerizes and forms the Nlrp1b inflammasome followed by host cell pyroptosis. Does not catalyze ubiquitination of mouse GSDMD. The chain is E3 ubiquitin-protein ligase ipaH7.8 from Shigella flexneri.